The sequence spans 477 residues: Glutamate--tRNA ligase 2 (477 aa).

Positions 9-19 (PSPTGFLHIGG) match the 'HIGH' region motif. The short motif at 238 to 242 (KLSKR) is the 'KMSKS' region element. An ATP-binding site is contributed by Lys-241.

Belongs to the class-I aminoacyl-tRNA synthetase family. Glutamate--tRNA ligase type 1 subfamily. As to quaternary structure, monomer.

The protein resides in the cytoplasm. It catalyses the reaction tRNA(Glu) + L-glutamate + ATP = L-glutamyl-tRNA(Glu) + AMP + diphosphate. Its function is as follows. Catalyzes the attachment of glutamate to tRNA(Glu) in a two-step reaction: glutamate is first activated by ATP to form Glu-AMP and then transferred to the acceptor end of tRNA(Glu). This is Glutamate--tRNA ligase 2 from Paramagnetospirillum magneticum (strain ATCC 700264 / AMB-1) (Magnetospirillum magneticum).